A 114-amino-acid chain; its full sequence is Large ribosomal subunit protein eL30 (114 aa).

Belongs to the eukaryotic ribosomal protein eL30 family.

The polypeptide is Large ribosomal subunit protein eL30 (RPL30) (Branchiostoma belcheri (Amphioxus)).